The sequence spans 163 residues: Large ribosomal subunit protein uL11 (163 aa).

Residues 1 to 26 are disordered; the sequence is MAETIEVLVAGGQADPGPPLGPELGP.

It belongs to the universal ribosomal protein uL11 family. Part of the ribosomal stalk of the 50S ribosomal subunit. Interacts with L10 and the large rRNA to form the base of the stalk. L10 forms an elongated spine to which L12 dimers bind in a sequential fashion forming a multimeric L10(L12)X complex.

Functionally, forms part of the ribosomal stalk which helps the ribosome interact with GTP-bound translation factors. The sequence is that of Large ribosomal subunit protein uL11 from Halobacterium salinarum (strain ATCC 29341 / DSM 671 / R1).